A 158-amino-acid polypeptide reads, in one-letter code: 2-C-methyl-D-erythritol 2,4-cyclodiphosphate synthase (158 aa).

Asp-9 and His-11 together coordinate a divalent metal cation. 4-CDP-2-C-methyl-D-erythritol 2-phosphate-binding positions include 9–11 and 35–36; these read DVH and HS. His-43 contributes to the a divalent metal cation binding site. 4-CDP-2-C-methyl-D-erythritol 2-phosphate contacts are provided by residues 57–59, 62–66, 133–136, Phe-140, and Arg-143; these read DIG, FPDTD, and TTSE.

Belongs to the IspF family. As to quaternary structure, homotrimer. The cofactor is a divalent metal cation.

The enzyme catalyses 4-CDP-2-C-methyl-D-erythritol 2-phosphate = 2-C-methyl-D-erythritol 2,4-cyclic diphosphate + CMP. The protein operates within isoprenoid biosynthesis; isopentenyl diphosphate biosynthesis via DXP pathway; isopentenyl diphosphate from 1-deoxy-D-xylulose 5-phosphate: step 4/6. In terms of biological role, involved in the biosynthesis of isopentenyl diphosphate (IPP) and dimethylallyl diphosphate (DMAPP), two major building blocks of isoprenoid compounds. Catalyzes the conversion of 4-diphosphocytidyl-2-C-methyl-D-erythritol 2-phosphate (CDP-ME2P) to 2-C-methyl-D-erythritol 2,4-cyclodiphosphate (ME-CPP) with a corresponding release of cytidine 5-monophosphate (CMP). The sequence is that of 2-C-methyl-D-erythritol 2,4-cyclodiphosphate synthase from Pasteurella multocida (strain Pm70).